The primary structure comprises 778 residues: Endonuclease MutS2 (778 aa).

Residue 328–335 participates in ATP binding; that stretch reads GPNTGGKT. One can recognise a Smr domain in the interval 702-777; sequence LDLRGKRYEE…GSGATIVTFK (76 aa).

It belongs to the DNA mismatch repair MutS family. MutS2 subfamily. Homodimer. Binds to stalled ribosomes, contacting rRNA.

Its function is as follows. Endonuclease that is involved in the suppression of homologous recombination and thus may have a key role in the control of bacterial genetic diversity. Functionally, acts as a ribosome collision sensor, splitting the ribosome into its 2 subunits. Detects stalled/collided 70S ribosomes which it binds and splits by an ATP-hydrolysis driven conformational change. Acts upstream of the ribosome quality control system (RQC), a ribosome-associated complex that mediates the extraction of incompletely synthesized nascent chains from stalled ribosomes and their subsequent degradation. Probably generates substrates for RQC. This is Endonuclease MutS2 from Streptococcus pneumoniae (strain Hungary19A-6).